We begin with the raw amino-acid sequence, 122 residues long: MASLLKAFIDPKKNFLARMHMKAISTRLRRYGLRYDDLYDQYYSMDIKEAMNRLPREVVDARNQRLKRAMDLSMKHEYLPKDLQAVQTPFRGYLQDMLALVERESKEREALGALPLYQRTLP.

The protein belongs to the UQCRB/QCR7 family. In terms of assembly, component of the ubiquinol-cytochrome c oxidoreductase (cytochrome b-c1 complex, complex III, CIII), a multisubunit enzyme composed of 10 subunits. The complex is composed of 3 respiratory subunits cytochrome b (MT-CYB), cytochrome c1 (CYC1-1 or CYC1-2) and Rieske protein (UCR1-1 or UCR1-2), 2 core protein subunits MPPalpha1 (or MPPalpha2) and MPPB, and 5 low-molecular weight protein subunits QCR7-1 (or QCR7-2), UCRQ-1 (or UCRQ-2), QCR9, UCRY and probably QCR6-1 (or QCR6-2). The complex exists as an obligatory dimer and forms supercomplexes (SCs) in the inner mitochondrial membrane with NADH-ubiquinone oxidoreductase (complex I, CI), resulting in different assemblies (supercomplexes SCI(1)III(2) and SCI(2)III(4)).

It is found in the mitochondrion inner membrane. In terms of biological role, component of the ubiquinol-cytochrome c oxidoreductase, a multisubunit transmembrane complex that is part of the mitochondrial electron transport chain which drives oxidative phosphorylation. The respiratory chain contains 3 multisubunit complexes succinate dehydrogenase (complex II, CII), ubiquinol-cytochrome c oxidoreductase (cytochrome b-c1 complex, complex III, CIII) and cytochrome c oxidase (complex IV, CIV), that cooperate to transfer electrons derived from NADH and succinate to molecular oxygen, creating an electrochemical gradient over the inner membrane that drives transmembrane transport and the ATP synthase. The cytochrome b-c1 complex catalyzes electron transfer from ubiquinol to cytochrome c, linking this redox reaction to translocation of protons across the mitochondrial inner membrane, with protons being carried across the membrane as hydrogens on the quinol. In the process called Q cycle, 2 protons are consumed from the matrix, 4 protons are released into the intermembrane space and 2 electrons are passed to cytochrome c. This chain is Cytochrome b-c1 complex subunit 7-1, mitochondrial (QCR7-1), found in Arabidopsis thaliana (Mouse-ear cress).